A 103-amino-acid chain; its full sequence is MPKRKVAASRGGREEVPKRRSARLSAKPVPDKAEPKAKALAAKDKSENKKAQSKGKKGPKGKQTEETNQEQIKDNLPAENGETKSEETPASDAAVEKEEVKSE.

Residues 1–103 form a disordered region; that stretch reads MPKRKVAASR…AVEKEEVKSE (103 aa). Residues 29 to 50 are compositionally biased toward basic and acidic residues; the sequence is VPDKAEPKAKALAAKDKSENKK. Basic residues predominate over residues 51–60; the sequence is AQSKGKKGPK. The segment covering 94 to 103 has biased composition (basic and acidic residues); that stretch reads AVEKEEVKSE.

It belongs to the HMGN family.

Its subcellular location is the nucleus. Functionally, binds to the inner side of the nucleosomal DNA thus altering the interaction between the DNA and the histone octamer. May be involved in the process which maintains transcribable genes in a unique chromatin conformation. The chain is Non-histone chromosomal protein HMG-14B (HMG14) from Gallus gallus (Chicken).